We begin with the raw amino-acid sequence, 72 residues long: ATP synthase subunit c (72 aa).

The next 2 helical transmembrane spans lie at 5–25 (LLAA…IGIA) and 52–72 (GLSE…LFVV).

Belongs to the ATPase C chain family. As to quaternary structure, F-type ATPases have 2 components, F(1) - the catalytic core - and F(0) - the membrane proton channel. F(1) has five subunits: alpha(3), beta(3), gamma(1), delta(1), epsilon(1). F(0) has three main subunits: a(1), b(2) and c(10-14). The alpha and beta chains form an alternating ring which encloses part of the gamma chain. F(1) is attached to F(0) by a central stalk formed by the gamma and epsilon chains, while a peripheral stalk is formed by the delta and b chains.

It localises to the cell membrane. Functionally, f(1)F(0) ATP synthase produces ATP from ADP in the presence of a proton or sodium gradient. F-type ATPases consist of two structural domains, F(1) containing the extramembraneous catalytic core and F(0) containing the membrane proton channel, linked together by a central stalk and a peripheral stalk. During catalysis, ATP synthesis in the catalytic domain of F(1) is coupled via a rotary mechanism of the central stalk subunits to proton translocation. In terms of biological role, key component of the F(0) channel; it plays a direct role in translocation across the membrane. A homomeric c-ring of between 10-14 subunits forms the central stalk rotor element with the F(1) delta and epsilon subunits. The protein is ATP synthase subunit c of Clostridium perfringens (strain SM101 / Type A).